A 173-amino-acid chain; its full sequence is Spermidine N(1)-acetyltransferase (173 aa).

An N-acetyltransferase domain is found at 5–162; sequence LTLRALERGD…GRYQDVKRMY (158 aa). Residues Met-28, Glu-33, Glu-41, and 49–52 each bind spermine; that span reads HIHD. Residue Glu-33 participates in Mg(2+) binding. Residues Glu-33 and Glu-41 each coordinate spermidine. Residue Glu-75 coordinates Mg(2+). Residue 84 to 86 participates in spermine binding; it reads EFQ. Residues 87–89, 94–100, and 127–136 contribute to the acetyl-CoA site; these read III, QGKGFAR, and NPKAVHLYEE. Tyr-134 serves as the catalytic Proton donor.

This sequence belongs to the acetyltransferase family. In terms of assembly, homododecamer; dimer of hexamers. Exists in solution in a variety of protein homooligomeric states including dodecamers in an open state. The presence of the polyamines spermidine or spermine shifts the equilibrium to dodecamers and induces the formation of the closed, symmetric dodecamers.

It localises to the cytoplasm. The enzyme catalyses an alkane-alpha,omega-diamine + acetyl-CoA = an N-acetylalkane-alpha,omega-diamine + CoA + H(+). It catalyses the reaction spermidine + acetyl-CoA = N(1)-acetylspermidine + CoA + H(+). It carries out the reaction spermidine + acetyl-CoA = N(8)-acetylspermidine + CoA + H(+). The catalysed reaction is spermine + acetyl-CoA = N(1)-acetylspermine + CoA + H(+). Its pathway is amine and polyamine degradation; spermidine degradation. It functions in the pathway amine and polyamine degradation; spermine degradation. Its activity is regulated as follows. Allosterically regulated by polyamines. Polyamines trigger conformational changes and induce the symmetric closed dodecameric state of the protein when they bind to their allosteric sites. Functionally, involved in the protection against polyamine toxicity by regulating their concentration. Catalyzes the transfer of an acetyl group from acetyl coenzyme A (AcCoA) to the primary amino groups of spermidine to yield N(1)- and N(8)-acetylspermidine. It can use polyamines such as spermine and N(1)-acetylspermine, but not putrescine or cadaverine. The protein is Spermidine N(1)-acetyltransferase (speG) of Vibrio cholerae serotype O1 (strain ATCC 39315 / El Tor Inaba N16961).